Consider the following 258-residue polypeptide: Deoxyribose-phosphate aldolase 2 (258 aa).

Residue Asp-102 is the Proton donor/acceptor of the active site. Residue Lys-165 is the Schiff-base intermediate with acetaldehyde of the active site. Lys-199 functions as the Proton donor/acceptor in the catalytic mechanism.

This sequence belongs to the DeoC/FbaB aldolase family. DeoC type 2 subfamily.

The protein resides in the cytoplasm. The catalysed reaction is 2-deoxy-D-ribose 5-phosphate = D-glyceraldehyde 3-phosphate + acetaldehyde. Its pathway is carbohydrate degradation; 2-deoxy-D-ribose 1-phosphate degradation; D-glyceraldehyde 3-phosphate and acetaldehyde from 2-deoxy-alpha-D-ribose 1-phosphate: step 2/2. In terms of biological role, catalyzes a reversible aldol reaction between acetaldehyde and D-glyceraldehyde 3-phosphate to generate 2-deoxy-D-ribose 5-phosphate. The chain is Deoxyribose-phosphate aldolase 2 (deoC2) from Vibrio vulnificus (strain YJ016).